We begin with the raw amino-acid sequence, 246 residues long: 1-(5-phosphoribosyl)-5-[(5-phosphoribosylamino)methylideneamino] imidazole-4-carboxamide isomerase (246 aa).

Aspartate 8 serves as the catalytic Proton acceptor. The Proton donor role is filled by aspartate 130.

The protein belongs to the HisA/HisF family.

Its subcellular location is the cytoplasm. It carries out the reaction 1-(5-phospho-beta-D-ribosyl)-5-[(5-phospho-beta-D-ribosylamino)methylideneamino]imidazole-4-carboxamide = 5-[(5-phospho-1-deoxy-D-ribulos-1-ylimino)methylamino]-1-(5-phospho-beta-D-ribosyl)imidazole-4-carboxamide. It participates in amino-acid biosynthesis; L-histidine biosynthesis; L-histidine from 5-phospho-alpha-D-ribose 1-diphosphate: step 4/9. The sequence is that of 1-(5-phosphoribosyl)-5-[(5-phosphoribosylamino)methylideneamino] imidazole-4-carboxamide isomerase from Hydrogenovibrio crunogenus (strain DSM 25203 / XCL-2) (Thiomicrospira crunogena).